The sequence spans 338 residues: Ferredoxin--NADP reductase (338 aa).

Asp36, Gln44, Tyr49, Val89, Phe123, Asp290, and Thr331 together coordinate FAD.

Belongs to the ferredoxin--NADP reductase type 2 family. In terms of assembly, homodimer. Requires FAD as cofactor.

It carries out the reaction 2 reduced [2Fe-2S]-[ferredoxin] + NADP(+) + H(+) = 2 oxidized [2Fe-2S]-[ferredoxin] + NADPH. This is Ferredoxin--NADP reductase from Anaplasma phagocytophilum (strain HZ).